A 260-amino-acid polypeptide reads, in one-letter code: Cytochrome c oxidase subunit 3 (260 aa).

A run of 7 helical transmembrane segments spans residues 14 to 34, 41 to 61, 81 to 101, 126 to 146, 158 to 178, 196 to 216, and 238 to 258; these read PWPL…ILWF, LLLA…RDVI, GMIL…WAFF, FLVP…VTWA, AIQG…LQAW, FFVA…FLFI, and AWYW…ICWW.

The protein belongs to the cytochrome c oxidase subunit 3 family. In terms of assembly, component of the cytochrome c oxidase (complex IV, CIV), a multisubunit enzyme composed of a catalytic core of 3 subunits and several supernumerary subunits. The complex exists as a monomer or a dimer and forms supercomplexes (SCs) in the inner mitochondrial membrane with ubiquinol-cytochrome c oxidoreductase (cytochrome b-c1 complex, complex III, CIII).

It is found in the mitochondrion inner membrane. It catalyses the reaction 4 Fe(II)-[cytochrome c] + O2 + 8 H(+)(in) = 4 Fe(III)-[cytochrome c] + 2 H2O + 4 H(+)(out). In terms of biological role, component of the cytochrome c oxidase, the last enzyme in the mitochondrial electron transport chain which drives oxidative phosphorylation. The respiratory chain contains 3 multisubunit complexes succinate dehydrogenase (complex II, CII), ubiquinol-cytochrome c oxidoreductase (cytochrome b-c1 complex, complex III, CIII) and cytochrome c oxidase (complex IV, CIV), that cooperate to transfer electrons derived from NADH and succinate to molecular oxygen, creating an electrochemical gradient over the inner membrane that drives transmembrane transport and the ATP synthase. Cytochrome c oxidase is the component of the respiratory chain that catalyzes the reduction of oxygen to water. Electrons originating from reduced cytochrome c in the intermembrane space (IMS) are transferred via the dinuclear copper A center (CU(A)) of subunit 2 and heme A of subunit 1 to the active site in subunit 1, a binuclear center (BNC) formed by heme A3 and copper B (CU(B)). The BNC reduces molecular oxygen to 2 water molecules using 4 electrons from cytochrome c in the IMS and 4 protons from the mitochondrial matrix. In Patiria pectinifera (Starfish), this protein is Cytochrome c oxidase subunit 3 (COIII).